The following is a 418-amino-acid chain: IQ domain-containing protein C (418 aa).

Residues 6 to 35 form the IQ domain; it reads FLRKVSTLQAGFRGFLVRRQFQSLRAEYEA. 5 disordered regions span residues 101–142, 230–264, 280–299, 327–355, and 376–418; these read QKKT…SVSK, HHAEDSSHKGRLKPQKHPDSVTSAGKTTAGSKGRE, SQAGGDRVTKGPDHGGQPFK, AETQLPTLSENQNIEDRYSRKPSRSAGPC, and GSLD…LQWR. 2 stretches are compositionally biased toward polar residues: residues 129–142 and 249–259; these read KASQGNSQDTSVSK and SVTSAGKTTAG. The stretch at 141–176 forms a coiled coil; sequence SKMENADLGLSQSQQELQEQRNHLAMELLWLQQAIN. Residues 390–404 show a composition bias toward polar residues; sequence PPSAGSSGHGNTSEL.

This chain is IQ domain-containing protein C (Iqcc), found in Mus musculus (Mouse).